We begin with the raw amino-acid sequence, 186 residues long: Elongation factor P (186 aa).

Belongs to the elongation factor P family.

The protein resides in the cytoplasm. Its pathway is protein biosynthesis; polypeptide chain elongation. In terms of biological role, involved in peptide bond synthesis. Stimulates efficient translation and peptide-bond synthesis on native or reconstituted 70S ribosomes in vitro. Probably functions indirectly by altering the affinity of the ribosome for aminoacyl-tRNA, thus increasing their reactivity as acceptors for peptidyl transferase. The polypeptide is Elongation factor P (Pelagibacter ubique (strain HTCC1062)).